A 370-amino-acid chain; its full sequence is Peridinin-chlorophyll a-binding protein 1, chloroplastic (370 aa).

Residues 1-57 (MVRSGKKAVVLAAVAFCATSVVQKSHGFVPSPLRQRAAAAGAAAASAATMFAPAAFA) constitute a chloroplast transit peptide. A run of 2 repeats spans residues 58–220 (DEIG…VPSG) and 221–370 (DKIG…AAQR).

As to quaternary structure, homotrimer.

The protein localises to the plastid. It localises to the chloroplast. Its function is as follows. Water-soluble antenna for capture of solar energy in the blue-green range. Peridinin is an asymmetric carotenoid. This is Peridinin-chlorophyll a-binding protein 1, chloroplastic from Amphidinium carterae (Dinoflagellate).